Here is a 567-residue protein sequence, read N- to C-terminus: GBF-interacting protein 1 (567 aa).

Disordered regions lie at residues 70-150, 164-192, and 545-567; these read ERKK…PSGI, DKVD…SKES, and PIGP…GNNY. Polar residues-rich tracts occupy residues 91–102 and 121–136; these read FASSYTDASNGR and TASS…TKPS. A compositionally biased stretch (basic and acidic residues) spans 182 to 191; that stretch reads DVVEPDKSKE. The segment covering 550 to 567 has biased composition (polar residues); sequence HVTNQQPQAARTNLGNNY.

This sequence belongs to the GIP1 family. Monomer, homodimer, homooligomer. Under non-reducing conditions, predominantly present in high molecular weight forms, but predominates in low molecular weight monomers under reducing conditions. Interacts with BZIP16, BZIP68 and GBF1. Interacts with LBD18. As to expression, expressed in roots, leaves, stems and flowers.

The protein localises to the nucleus. Its function is as follows. Plant specific protein that enhances G-box-binding factor (GBF) DNA binding activity. May function as a nuclear chaperone or lever and regulate the multimeric state of GBFs. May contribute to bZIP-mediated gene regulation. Is able to refold denatured rhodanese in vitro. Reduces DNA-binding activity of BZIP16, BZIP68 and GBF1 under non-reducing conditions through direct physical interaction. Acts as a negative co-regulator in red and blue light-mediated hypocotyl elongation. Functions to promote hypocotyl elongation during the early stages of seedling development by regulating the repression effect by BZIP16 and the activation effect by BZIP68 and GBF1 on LHCB2.4 expression. Enhances transcriptional activity of LBD18 in the EXP14 promoter. May act as a transcriptional coactivator of LBD18. The chain is GBF-interacting protein 1 from Arabidopsis thaliana (Mouse-ear cress).